The following is an 807-amino-acid chain: SWI/SNF complex subunit SWI3C (807 aa).

The disordered stretch occupies residues 1 to 74 (MPASEDRRGK…DPGLGIGEVV (74 aa)). The span at 28–54 (EEEDMEEEDEENNNNNNEEMDDVENAD) shows a compositional bias: acidic residues. The region spanning 176-274 (HVLPMHSDWF…YCATAQSHPG (99 aa)) is the SWIRM domain. The ZZ-type; degenerate zinc finger occupies 340 to 394 (LCDSHCNHCSRPLPTVYFQSQKKGDILLCCDCFHHGRFVVGHSCLDFVRVDPMKF). Residues Cys-345, Cys-348, Cys-368, and Cys-371 each coordinate Zn(2+). Positions 398 to 449 (QDGDNWTDQETLLLLEAVELYNENWVQIADHVGSKSKAQCILHFLRLPVEDG) constitute an SANT domain. 2 stretches are compositionally biased toward polar residues: residues 458-467 (GVTNTENPTN) and 552-569 (ENQQ…NGAE). Disordered stretches follow at residues 458-487 (GVTN…SEQG) and 549-571 (LDGE…AEAQ). Positions 598 to 656 (ADHEEREIQRLSANIVNHQLKRMELKLKQFAEIETLLMKECEQVEKTRQRFSAERARML) form a coiled coil. Composition is skewed to low complexity over residues 692-703 (QHQQQQASATSQ) and 726-739 (QQQQ…QQQQ). 3 disordered regions span residues 692 to 713 (QHQQ…FSNN), 721 to 740 (HFMA…QQQA), and 781 to 807 (SINQ…LGLN). The span at 798-807 (SGSGSGLGLN) shows a compositional bias: gly residues.

As to quaternary structure, heterodimer. Interacts with SWI3A, SWI3B and BRM, but not with BSH. Interacts with MORC6 and SUVH9. Expressed in roots, stems, leaves, flowers and siliques.

The protein resides in the nucleus. Functionally, component of a multiprotein complex equivalent of the SWI/SNF complex, an ATP-dependent chromatin-remodeling complex, which is required for the positive and negative regulation of gene expression of a large number of genes. It changes chromatin structure by altering DNA-histone contacts within a nucleosome, leading eventually to a change in nucleosome position, thus facilitating or repressing binding of gene-specific transcription factors. This Arabidopsis thaliana (Mouse-ear cress) protein is SWI/SNF complex subunit SWI3C (SWI3C).